A 259-amino-acid polypeptide reads, in one-letter code: Type III pantothenate kinase (259 aa).

Residue D6 to T13 participates in ATP binding. G107 to R110 provides a ligand contact to substrate. D109 functions as the Proton acceptor in the catalytic mechanism. Position 129 (D129) interacts with K(+). Position 132 (T132) interacts with ATP. A substrate-binding site is contributed by T184.

It belongs to the type III pantothenate kinase family. As to quaternary structure, homodimer. It depends on NH4(+) as a cofactor. The cofactor is K(+).

The protein resides in the cytoplasm. It catalyses the reaction (R)-pantothenate + ATP = (R)-4'-phosphopantothenate + ADP + H(+). The protein operates within cofactor biosynthesis; coenzyme A biosynthesis; CoA from (R)-pantothenate: step 1/5. Its function is as follows. Catalyzes the phosphorylation of pantothenate (Pan), the first step in CoA biosynthesis. The chain is Type III pantothenate kinase from Listeria monocytogenes serotype 4b (strain CLIP80459).